The primary structure comprises 872 residues: Tetratricopeptide repeat protein 16 (872 aa).

A disordered region spans residues 1–20 (MTDSDEDALKVDQGPSQDIP). TPR repeat units follow at residues 61–94 (VREY…DPQL), 96–128 (DFYA…QQDN), 136–169 (TFVL…QPEK), 251–284 (AQQA…NPLD), 285–318 (PSFF…VTED), 331–364 (LLTY…EQQE), 365–398 (KGLY…SPQD), and 406–439 (GLLQ…NPQK). Disordered regions lie at residues 557 to 640 (ATPE…ETET) and 653 to 872 (TAMT…YEVL). Residues 577–590 (KEEEEKEEEEQKEE) are compositionally biased toward acidic residues. The segment covering 591–604 (EEQKKEEKKEEKKP) has biased composition (basic and acidic residues). Composition is skewed to polar residues over residues 610–640 (KVAS…ETET), 653–675 (TAMT…NNRE), 689–709 (GQRQ…NFSK), and 721–754 (KTKA…SQGP). A compositionally biased stretch (basic residues) spans 762 to 783 (KTTRSPRQRPRKVKAARGRSWR). Polar residues-rich tracts occupy residues 799-827 (RSST…GQRT) and 839-861 (GMSS…SKTE).

The sequence is that of Tetratricopeptide repeat protein 16 (TTC16) from Macaca fascicularis (Crab-eating macaque).